A 794-amino-acid polypeptide reads, in one-letter code: Protein SPA1-RELATED 4 (794 aa).

One can recognise a Protein kinase domain in the interval 1 to 268 (MKGSSESSSR…MSELLQSEFI (268 aa)). The segment at 126 to 165 (SCSDSGSDEDATTKSREIGSSRQEEILSERRSKQQEEVKK) is disordered. Residues 136-165 (ATTKSREIGSSRQEEILSERRSKQQEEVKK) are compositionally biased toward basic and acidic residues. The stretch at 272–326 (RENLEEREAAMELRDRIEEQELLLEFLFLIQQRKQEAADKLQDTISLLSSDIDQV) forms a coiled coil. 2 disordered regions span residues 352–373 (QGAETTAAEEENDDNSIDEESK) and 428–447 (GRSSEKSSMSQPSKDPINDS). Residues 358-369 (AAEEENDDNSID) are compositionally biased toward acidic residues. 7 WD repeats span residues 482–521 (NSSNLVCAIGFDRDGEFFATAGVNKKIKIFECESIIKDGR), 531–571 (ASRS…LVTE), 574–614 (EHEK…SIGT), 616–656 (KTKA…LPLC), 660–698 (GHHKTVSYVRFVDSSTLVSSSTDNTLKLWDLSMSISGIN), 707–746 (GHTNVKNFVGLSVSDGYIATGSETNEVFVYHKAFPMPVLS), and 762–794 (DASQFISSVCWRGQSSTLVAANSTGNIKILEMV). The DWD box signature appears at 635-649 (AFGSADHKVYYYDLR).

In terms of assembly, interacts with COP1 and CO. Binds to CRY1 in response to blue light, this interaction prevents SPA1/COP1 complex formation and thus avoid COP1-dependent degradation of the transcription factor HY5 by the proteasome and promotes hypocotyl elongation.

The protein localises to the nucleus. Repressor of photomorphogenesis in the light. Probably part of the COP1/SPA E3 ubiquitin-protein ligase complex. This Arabidopsis thaliana (Mouse-ear cress) protein is Protein SPA1-RELATED 4 (SPA4).